Consider the following 189-residue polypeptide: MSIKSDKWIRRMAEEHKMIEPFVPDQVRAAEDGRRIVSYGTSSYGYDIRCADEFKIFTNINSTIVDPKNFDEGSFVDFKGDVCIIPPNSFALARTVEYFRIPRTVLTVCLGKSTYARCGIIVNVTPFEPEWEGYVTLEFSNTTPLPAKIYANEGVAQVLFFESDEVCDVSYADRGGKYQGQRGVTLPKT.

Residues lysine 112–arginine 117, threonine 136–glutamate 138, glutamine 157, tyrosine 171, and glutamine 181 contribute to the dCTP site. Residue glutamate 138 is the Proton donor/acceptor of the active site.

The protein belongs to the dCTP deaminase family. Homotrimer.

The enzyme catalyses dCTP + H2O + H(+) = dUTP + NH4(+). Its pathway is pyrimidine metabolism; dUMP biosynthesis; dUMP from dCTP (dUTP route): step 1/2. Catalyzes the deamination of dCTP to dUTP. The chain is dCTP deaminase from Burkholderia thailandensis (strain ATCC 700388 / DSM 13276 / CCUG 48851 / CIP 106301 / E264).